A 450-amino-acid polypeptide reads, in one-letter code: Bifunctional protein GlmU (450 aa).

Residues 1–226 (MLAVAVLAAG…PDEVNGINNR (226 aa)) are pyrophosphorylase. UDP-N-acetyl-alpha-D-glucosamine is bound by residues 7-10 (LAAG), K21, Q73, and 78-79 (GT). D103 is a Mg(2+) binding site. 4 residues coordinate UDP-N-acetyl-alpha-D-glucosamine: G140, E155, N170, and N224. Mg(2+) is bound at residue N224. Residues 227–247 (KQLAQCEGVLQQRLRDYWMDE) form a linker region. The segment at 248 to 450 (GVTFVDPASC…TKDNWANRSI (203 aa)) is N-acetyltransferase. UDP-N-acetyl-alpha-D-glucosamine is bound by residues R329 and K347. H359 functions as the Proton acceptor in the catalytic mechanism. Residues Y362 and N373 each contribute to the UDP-N-acetyl-alpha-D-glucosamine site. Acetyl-CoA is bound by residues A376, 382–383 (NY), A419, and R436.

It in the N-terminal section; belongs to the N-acetylglucosamine-1-phosphate uridyltransferase family. In the C-terminal section; belongs to the transferase hexapeptide repeat family. Homotrimer. Mg(2+) serves as cofactor.

Its subcellular location is the cytoplasm. The enzyme catalyses alpha-D-glucosamine 1-phosphate + acetyl-CoA = N-acetyl-alpha-D-glucosamine 1-phosphate + CoA + H(+). The catalysed reaction is N-acetyl-alpha-D-glucosamine 1-phosphate + UTP + H(+) = UDP-N-acetyl-alpha-D-glucosamine + diphosphate. The protein operates within nucleotide-sugar biosynthesis; UDP-N-acetyl-alpha-D-glucosamine biosynthesis; N-acetyl-alpha-D-glucosamine 1-phosphate from alpha-D-glucosamine 6-phosphate (route II): step 2/2. It participates in nucleotide-sugar biosynthesis; UDP-N-acetyl-alpha-D-glucosamine biosynthesis; UDP-N-acetyl-alpha-D-glucosamine from N-acetyl-alpha-D-glucosamine 1-phosphate: step 1/1. Its pathway is bacterial outer membrane biogenesis; LPS lipid A biosynthesis. Catalyzes the last two sequential reactions in the de novo biosynthetic pathway for UDP-N-acetylglucosamine (UDP-GlcNAc). The C-terminal domain catalyzes the transfer of acetyl group from acetyl coenzyme A to glucosamine-1-phosphate (GlcN-1-P) to produce N-acetylglucosamine-1-phosphate (GlcNAc-1-P), which is converted into UDP-GlcNAc by the transfer of uridine 5-monophosphate (from uridine 5-triphosphate), a reaction catalyzed by the N-terminal domain. This is Bifunctional protein GlmU from Synechococcus sp. (strain CC9902).